The primary structure comprises 375 residues: Chaperone protein DnaJ (375 aa).

Residues 5–70 (DFYETLGVAK…QKRAAYDRYG (66 aa)) form the J domain. The CR-type zinc-finger motif lies at 136-214 (GKTAQIRVPT…CHGQGRVTEE (79 aa)). Zn(2+) is bound by residues Cys-149, Cys-152, Cys-166, Cys-169, Cys-188, Cys-191, Cys-202, and Cys-205. 4 CXXCXGXG motif repeats span residues 149–156 (CDVCSGSG), 166–173 (CGTCQGTG), 188–195 (CPTCHGRG), and 202–209 (CPKCHGQG).

The protein belongs to the DnaJ family. In terms of assembly, homodimer. Requires Zn(2+) as cofactor.

It is found in the cytoplasm. Its function is as follows. Participates actively in the response to hyperosmotic and heat shock by preventing the aggregation of stress-denatured proteins and by disaggregating proteins, also in an autonomous, DnaK-independent fashion. Unfolded proteins bind initially to DnaJ; upon interaction with the DnaJ-bound protein, DnaK hydrolyzes its bound ATP, resulting in the formation of a stable complex. GrpE releases ADP from DnaK; ATP binding to DnaK triggers the release of the substrate protein, thus completing the reaction cycle. Several rounds of ATP-dependent interactions between DnaJ, DnaK and GrpE are required for fully efficient folding. Also involved, together with DnaK and GrpE, in the DNA replication of plasmids through activation of initiation proteins. This Rhizobium etli (strain ATCC 51251 / DSM 11541 / JCM 21823 / NBRC 15573 / CFN 42) protein is Chaperone protein DnaJ.